Here is a 620-residue protein sequence, read N- to C-terminus: Membrane protein insertase YidC (620 aa).

The chain crosses the membrane as a helical span at residues 7–27 (NYLIAIALSVMVVLGWQFFYM). The span at 37-58 (AEQAQQAQQAKTPATQATPGAA) shows a compositional bias: low complexity. Positions 37 to 77 (AEQAQQAQQAKTPATQATPGAAVNGALPGQTQASATTSRED) are disordered. 4 helical membrane-spanning segments follow: residues 399–419 (FGVAILLTTIAVKLLFFPLAS), 469–489 (WPLLLQIPVFFALYKVIYITI), 514–534 (LFGLLPFESPAMLHLGIWPII), and 560–580 (WMPLVFTFMLGSFPAGLVIYW).

It belongs to the OXA1/ALB3/YidC family. Type 1 subfamily. In terms of assembly, interacts with the Sec translocase complex via SecD. Specifically interacts with transmembrane segments of nascent integral membrane proteins during membrane integration.

The protein resides in the cell inner membrane. In terms of biological role, required for the insertion and/or proper folding and/or complex formation of integral membrane proteins into the membrane. Involved in integration of membrane proteins that insert both dependently and independently of the Sec translocase complex, as well as at least some lipoproteins. Aids folding of multispanning membrane proteins. This Allorhizobium ampelinum (strain ATCC BAA-846 / DSM 112012 / S4) (Agrobacterium vitis (strain S4)) protein is Membrane protein insertase YidC.